The following is a 129-amino-acid chain: Bacteriohemerythrin (129 aa).

Residues His19, His59, Glu63, His78, His82, His119, and Asp124 each contribute to the Fe cation site.

Belongs to the hemerythrin family. In terms of assembly, monomer.

In terms of biological role, oxygen-binding protein. May be involved in a storage mechanism or for delivery to oxygen-requiring enzymes. The oxygen-binding site contains two iron atoms. The polypeptide is Bacteriohemerythrin (Clostridium acetobutylicum (strain ATCC 824 / DSM 792 / JCM 1419 / IAM 19013 / LMG 5710 / NBRC 13948 / NRRL B-527 / VKM B-1787 / 2291 / W)).